The sequence spans 472 residues: Putative ankyrin repeat protein L675 (472 aa).

ANK repeat units follow at residues 125-156, 187-216, 265-295, 297-323, 325-351, 352-381, 382-411, and 413-440; these read YKAN…DIHL, DNFK…NETI, YKTK…DKDI, HAML…NIHY, NDQA…GMDS, NNVF…DVNA, NNRS…DIKI, and DTVI…SCDD.

This Acanthamoeba polyphaga (Amoeba) protein is Putative ankyrin repeat protein L675.